The following is a 663-amino-acid chain: Transketolase 1 (663 aa).

His-26 lines the substrate pocket. Lys-46 bears the N6-acetyllysine mark. Residues His-66 and Gly-114–Leu-116 contribute to the thiamine diphosphate site. Asp-155 provides a ligand contact to Mg(2+). The thiamine diphosphate site is built by Gly-156 and Asn-185. Residues Asn-185 and Ile-187 each coordinate Mg(2+). Substrate is bound by residues His-261, Arg-358, and Ser-385. His-261 provides a ligand contact to thiamine diphosphate. The active-site Proton donor is the Glu-411. Residue Phe-437 participates in thiamine diphosphate binding. The substrate site is built by His-461, Asp-469, His-473, and Arg-520.

This sequence belongs to the transketolase family. As to quaternary structure, homodimer. Mg(2+) is required as a cofactor. Ca(2+) serves as cofactor. Requires Mn(2+) as cofactor. It depends on Co(2+) as a cofactor. The cofactor is thiamine diphosphate.

The enzyme catalyses D-sedoheptulose 7-phosphate + D-glyceraldehyde 3-phosphate = aldehydo-D-ribose 5-phosphate + D-xylulose 5-phosphate. Its function is as follows. Catalyzes the transfer of a two-carbon ketol group from a ketose donor to an aldose acceptor, via a covalent intermediate with the cofactor thiamine pyrophosphate. Thus, catalyzes the reversible transfer of a two-carbon ketol group from sedoheptulose-7-phosphate to glyceraldehyde-3-phosphate, producing xylulose-5-phosphate and ribose-5-phosphate. The chain is Transketolase 1 (tktA) from Escherichia coli (strain K12).